The chain runs to 909 residues: Glucan endo-1,3-beta-D-glucosidase ARB_01444 (909 aa).

An N-terminal signal peptide occupies residues 1 to 23; sequence MKPYTTLPGVAVLVSLLTQSAHA. Residues 136–187 form a disordered region; sequence KRSPAPQRHPPAPTKATAGYQFTNCTSTSNPGPTATSPTSGIPSQPSAPPAT. A compositionally biased stretch (polar residues) spans 155 to 180; the sequence is YQFTNCTSTSNPGPTATSPTSGIPSQ. N-linked (GlcNAc...) asparagine glycosylation is found at N159, N239, and N259. Positions 191–430 are beta-sandwich subdomain; the sequence is QDIFQPIAKD…KGVIQVAKNP (240 aa). The GH81 domain occupies 191–909; that stretch reads QDIFQPIAKD…AGEYSTYIAL (719 aa). The interval 431 to 524 is alpha/beta subdomain; sequence SAEEGEGIYD…GDSWTMVEGN (94 aa). The interval 539–909 is (alpha/beta)6 barrel subdomain; sequence SSQVTLSEGA…AGEYSTYIAL (371 aa). The active site involves D654. Residues H658, D727, E729, and E733 each contribute to the (1,3-beta-D-glucosyl)n site. Active-site residues include E729 and E733. A may provide specificity for triple-helical beta-glucan region spans residues 798 to 800; the sequence is KID. Y811 serves as a coordination point for (1,3-beta-D-glucosyl)n.

It belongs to the glycosyl hydrolase 81 family.

It is found in the secreted. It localises to the cell wall. It catalyses the reaction Hydrolysis of (1-&gt;3)-beta-D-glucosidic linkages in (1-&gt;3)-beta-D-glucans.. Its function is as follows. Cleaves internal linkages in 1,3-beta-glucan. Probably involved in cell separation after cytokinesis. This is Glucan endo-1,3-beta-D-glucosidase ARB_01444 from Arthroderma benhamiae (strain ATCC MYA-4681 / CBS 112371) (Trichophyton mentagrophytes).